The primary structure comprises 193 residues: Imidazoleglycerol-phosphate dehydratase (193 aa).

This sequence belongs to the imidazoleglycerol-phosphate dehydratase family.

It is found in the cytoplasm. The catalysed reaction is D-erythro-1-(imidazol-4-yl)glycerol 3-phosphate = 3-(imidazol-4-yl)-2-oxopropyl phosphate + H2O. It functions in the pathway amino-acid biosynthesis; L-histidine biosynthesis; L-histidine from 5-phospho-alpha-D-ribose 1-diphosphate: step 6/9. The chain is Imidazoleglycerol-phosphate dehydratase from Metallosphaera sedula (strain ATCC 51363 / DSM 5348 / JCM 9185 / NBRC 15509 / TH2).